Consider the following 118-residue polypeptide: Small ribosomal subunit protein mS37 (118 aa).

The region spanning 42 to 84 is the CHCH domain; that stretch reads EATCITEMSVMMACWKQNEFRDDACRKEIQGFLDCAARAQEAR. Short sequence motifs (cx9C motif) lie at residues 45–55 and 66–76; these read CITEMSVMMAC and CRKEIQGFLDC. 2 cysteine pairs are disulfide-bonded: Cys45–Cys76 and Cys55–Cys66.

Belongs to the mitochondrion-specific ribosomal protein mS37 family. Component of the mitochondrial small ribosomal subunit (mt-SSU). Mature mammalian 55S mitochondrial ribosomes consist of a small (28S) and a large (39S) subunit. The 28S small subunit contains a 12S ribosomal RNA (12S mt-rRNA) and 30 different proteins. The 39S large subunit contains a 16S rRNA (16S mt-rRNA), a copy of mitochondrial valine transfer RNA (mt-tRNA(Val)), which plays an integral structural role, and 52 different proteins.

Its subcellular location is the mitochondrion. The protein localises to the nucleus. The sequence is that of Small ribosomal subunit protein mS37 (CHCHD1) from Homo sapiens (Human).